Here is a 361-residue protein sequence, read N- to C-terminus: Chorismate synthase (361 aa).

R48 serves as a coordination point for NADP(+). FMN is bound by residues 125–127 (RSS), 238–239 (NA), G278, 293–297 (KPTSS), and R319.

It belongs to the chorismate synthase family. Homotetramer. It depends on FMNH2 as a cofactor.

The enzyme catalyses 5-O-(1-carboxyvinyl)-3-phosphoshikimate = chorismate + phosphate. The protein operates within metabolic intermediate biosynthesis; chorismate biosynthesis; chorismate from D-erythrose 4-phosphate and phosphoenolpyruvate: step 7/7. Its function is as follows. Catalyzes the anti-1,4-elimination of the C-3 phosphate and the C-6 proR hydrogen from 5-enolpyruvylshikimate-3-phosphate (EPSP) to yield chorismate, which is the branch point compound that serves as the starting substrate for the three terminal pathways of aromatic amino acid biosynthesis. This reaction introduces a second double bond into the aromatic ring system. This Vibrio anguillarum (strain ATCC 68554 / 775) (Listonella anguillarum) protein is Chorismate synthase.